We begin with the raw amino-acid sequence, 196 residues long: Adenylate kinase (196 aa).

Gly9–Thr17 is an ATP binding site.

This sequence belongs to the archaeal adenylate kinase family.

The protein resides in the cytoplasm. The enzyme catalyses AMP + ATP = 2 ADP. The polypeptide is Adenylate kinase (Thermococcus onnurineus (strain NA1)).